Reading from the N-terminus, the 464-residue chain is tRNA modification GTPase MnmE (464 aa).

(6S)-5-formyl-5,6,7,8-tetrahydrofolate contacts are provided by Arg27, Glu89, and Arg128. The TrmE-type G domain occupies 225-384 (GLATAIVGRP…LEETIAHLFF (160 aa)). Residue Asn235 participates in K(+) binding. GTP contacts are provided by residues 235–240 (NVGKSS), 254–260 (TDVAGTT), and 279–282 (DTAG). Residue Ser239 participates in Mg(2+) binding. K(+)-binding residues include Thr254, Val256, and Thr259. Position 260 (Thr260) interacts with Mg(2+). Lys464 contacts (6S)-5-formyl-5,6,7,8-tetrahydrofolate.

The protein belongs to the TRAFAC class TrmE-Era-EngA-EngB-Septin-like GTPase superfamily. TrmE GTPase family. Homodimer. Heterotetramer of two MnmE and two MnmG subunits. It depends on K(+) as a cofactor.

The protein resides in the cytoplasm. Exhibits a very high intrinsic GTPase hydrolysis rate. Involved in the addition of a carboxymethylaminomethyl (cmnm) group at the wobble position (U34) of certain tRNAs, forming tRNA-cmnm(5)s(2)U34. This Levilactobacillus brevis (strain ATCC 367 / BCRC 12310 / CIP 105137 / JCM 1170 / LMG 11437 / NCIMB 947 / NCTC 947) (Lactobacillus brevis) protein is tRNA modification GTPase MnmE.